We begin with the raw amino-acid sequence, 214 residues long: Pyridoxine/pyridoxamine 5'-phosphate oxidase (214 aa).

Residues 8–11 (RINY) and K66 each bind substrate. Residues 61-66 (RIVLIK), 76-77 (FT), R82, K83, and Q105 each bind FMN. Positions 123, 127, and 131 each coordinate substrate. FMN is bound by residues 140–141 (QS) and W184. Substrate is bound at residue 190–192 (RLH). R194 contacts FMN.

The protein belongs to the pyridoxamine 5'-phosphate oxidase family. As to quaternary structure, homodimer. The cofactor is FMN.

The enzyme catalyses pyridoxamine 5'-phosphate + O2 + H2O = pyridoxal 5'-phosphate + H2O2 + NH4(+). It carries out the reaction pyridoxine 5'-phosphate + O2 = pyridoxal 5'-phosphate + H2O2. The protein operates within cofactor metabolism; pyridoxal 5'-phosphate salvage; pyridoxal 5'-phosphate from pyridoxamine 5'-phosphate: step 1/1. It functions in the pathway cofactor metabolism; pyridoxal 5'-phosphate salvage; pyridoxal 5'-phosphate from pyridoxine 5'-phosphate: step 1/1. Catalyzes the oxidation of either pyridoxine 5'-phosphate (PNP) or pyridoxamine 5'-phosphate (PMP) into pyridoxal 5'-phosphate (PLP). The sequence is that of Pyridoxine/pyridoxamine 5'-phosphate oxidase from Burkholderia ambifaria (strain ATCC BAA-244 / DSM 16087 / CCUG 44356 / LMG 19182 / AMMD) (Burkholderia cepacia (strain AMMD)).